The chain runs to 166 residues: Regulator of ribonuclease activity A (166 aa).

It belongs to the RraA family. Homotrimer. Binds to both RNA-binding sites in the C-terminal region of Rne and to RhlB.

The protein resides in the cytoplasm. Its function is as follows. Globally modulates RNA abundance by binding to RNase E (Rne) and regulating its endonucleolytic activity. Can modulate Rne action in a substrate-dependent manner by altering the composition of the degradosome. Modulates RNA-binding and helicase activities of the degradosome. In Pasteurella multocida (strain Pm70), this protein is Regulator of ribonuclease activity A.